Consider the following 586-residue polypeptide: Estrogen receptor (586 aa).

A modulating region spans residues 1–179 (MTMPLPNKTT…SMESTKETRY (179 aa)). The tract at residues 144-173 (FYRSSSDNRRQSGRERMSSANDKGPPSMES) is disordered. The span at 149-160 (SDNRRQSGRERM) shows a compositional bias: basic and acidic residues. NR C4-type zinc fingers lie at residues 180 to 200 (CAVCSDYASGYHYGVWSCEGC) and 216 to 240 (CPATNQCTIDKNRRKSCQACRLRKC). The segment at residues 180–245 (CAVCSDYASG…RLRKCYEVGM (66 aa)) is a DNA-binding region (nuclear receptor). A hinge region spans residues 246–302 (MKGGIRKDRRGGRLLKHKRQKEEQEQKNDVDPSEIRTASIWVNPSVKSMKLSPVLSL). Residues 252 to 264 (KDRRGGRLLKHKR) show a composition bias toward basic residues. Residues 252 to 276 (KDRRGGRLLKHKRQKEEQEQKNDVD) are disordered. Residues 265 to 276 (QKEEQEQKNDVD) show a composition bias toward basic and acidic residues. The region spanning 303–539 (TAEQLISALM…DLLLEMLDAH (237 aa)) is the NR LBD domain. Residues 543 to 556 (TPKDKTTTQEEDSR) show a composition bias toward basic and acidic residues. Residues 543 to 569 (TPKDKTTTQEEDSRSPPTTTVNGASPC) are disordered.

Belongs to the nuclear hormone receptor family. NR3 subfamily. As to quaternary structure, binds DNA as a homodimer. Can form a heterodimer with ER-beta.

The protein resides in the nucleus. Functionally, the steroid hormones and their receptors are involved in the regulation of eukaryotic gene expression and affect cellular proliferation and differentiation in target tissues. This Xenopus laevis (African clawed frog) protein is Estrogen receptor (esr1).